We begin with the raw amino-acid sequence, 154 residues long: Ribosomal RNA large subunit methyltransferase H (154 aa).

Residue glycine 103 participates in S-adenosyl-L-methionine binding.

This sequence belongs to the RNA methyltransferase RlmH family. In terms of assembly, homodimer.

It is found in the cytoplasm. The enzyme catalyses pseudouridine(1915) in 23S rRNA + S-adenosyl-L-methionine = N(3)-methylpseudouridine(1915) in 23S rRNA + S-adenosyl-L-homocysteine + H(+). Its function is as follows. Specifically methylates the pseudouridine at position 1915 (m3Psi1915) in 23S rRNA. The protein is Ribosomal RNA large subunit methyltransferase H of Gemmatimonas aurantiaca (strain DSM 14586 / JCM 11422 / NBRC 100505 / T-27).